The sequence spans 895 residues: Androgen receptor (895 aa).

Positions 1–533 (MEVQLGLGRV…PIDYYFPPQK (533 aa)) are modulating. Residues 1–562 (MEVQLGLGRV…GSCKVFFKRA (562 aa)) are interaction with ZNF318. Disordered stretches follow at residues 33 to 155 (VIQN…PTFP) and 175 to 211 (QLLQQQQQEAVSEGSSSGRAREASGAPTSSKDNYLGG). Composition is skewed to low complexity over residues 44–81 (AASAAPPGASLQQQQQQQQQETSPRQQQQQQGEDGSPQ) and 175–200 (QLLQQQQQEAVSEGSSSGRAREASGA). A Phosphoserine; by CDK9 modification is found at serine 66. The residue at position 79 (serine 79) is a Phosphoserine. The segment covering 201 to 211 (PTSSKDNYLGG) has biased composition (polar residues). Tyrosine 208 is subject to Phosphotyrosine; by CSK. Serine 241 is subject to Phosphoserine. Phosphotyrosine; by CSK and TNK2 is present on tyrosine 252. A phosphotyrosine; by CSK mark is found at tyrosine 292, tyrosine 331, tyrosine 342, and tyrosine 347. Tyrosine 348 is subject to Phosphotyrosine; by CSK and TNK2. Lysine 371 participates in a covalent cross-link: Glycyl lysine isopeptide (Lys-Gly) (interchain with G-Cter in SUMO). The residue at position 378 (tyrosine 378) is a Phosphotyrosine; by CSK. Lysine 496 is covalently cross-linked (Glycyl lysine isopeptide (Lys-Gly) (interchain with G-Cter in SUMO)). Phosphotyrosine; by CSK occurs at positions 510 and 527. An interaction with LPXN region spans residues 527–894 (YYFPPQKTCL…GKVKPIYFHT (368 aa)). Positions 534-607 (TCLICGDEAS…AGMTLGARKL (74 aa)) form a DNA-binding region, nuclear receptor. 2 consecutive NR C4-type zinc fingers follow at residues 535 to 555 (CLICGDEASGCHYGALTCGSC) and 571 to 595 (CASRNDCTIDKFRRKNCPSCRLRKC). An interaction with HIPK3 region spans residues 547–637 (YGALTCGSCK…TEETAQKLTV (91 aa)). The segment at 567 to 894 (QKYLCASRND…GKVKPIYFHT (328 aa)) is interaction with CCAR1. The interval 600-894 (MTLGARKLKK…GKVKPIYFHT (295 aa)) is interaction with KAT7. Serine 626 is modified (phosphoserine; by STK4/MST1). The 232-residue stretch at 644-875 (ECQPIFLNVL…DFPEMMAEII (232 aa)) folds into the NR LBD domain. Asparagine 681 and arginine 728 together coordinate 17beta-hydroxy-5alpha-androstan-3-one. Glycyl lysine isopeptide (Lys-Gly) (interchain with G-Cter in ubiquitin) cross-links involve residues lysine 821 and lysine 823. Position 853 (threonine 853) interacts with 17beta-hydroxy-5alpha-androstan-3-one. Tyrosine 891 carries the post-translational modification Phosphotyrosine; by CSK.

Belongs to the nuclear hormone receptor family. NR3 subfamily. Binds DNA as a homodimer. Part of a ternary complex containing AR, EFCAB6/DJBP and PARK7. Interacts with HIPK3 and NR0B2 in the presence of androgen. The ligand binding domain interacts with KAT7/HBO1 in the presence of dihydrotestosterone. Interacts with EFCAB6/DJBP, PQBP1, RANBP9, RBAK, SPDEF, SRA1, TGFB1I1 and RREB1. Interacts with ZMIZ1/ZIMP10 and ZMIZ2/ZMIP7 which both enhance its transactivation activity. Interacts with SLC30A9 and RAD54L2/ARIP4. Interacts with MACROD1 (via macro domain). Interacts via the ligand-binding domain with LXXLL and FXXLF motifs from NCOA1, NCOA2, NCOA3 and MAGEA11. Interacts (via nuclear receptor DNA binding domain and nuclear receptor ligand binding domain) with NCOA4. The AR N-terminal poly-Gln region binds Ran resulting in enhancement of AR-mediated transactivation. Ran-binding decreases as the poly-Gln length increases. Interacts with HIP1 (via coiled coil domain). Interacts (via ligand-binding domain) with TRIM68. Interacts with TNK2. Interacts with USP26. Interacts with RNF6. Interacts (regulated by RNF6 probably through polyubiquitination) with RNF14; regulates AR transcriptional activity. Interacts with PRMT2 and TRIM24. Interacts with RACK1. Interacts with RANBP10; this interaction enhances dihydrotestosterone-induced AR transcriptional activity. Interacts with PRPF6 in a hormone-independent way; this interaction enhances dihydrotestosterone-induced AR transcriptional activity. Interacts with STK4/MST1. Interacts with ZIPK/DAPK3. Interacts with LPXN. Interacts with MAK. Part of a complex containing AR, MAK and NCOA3. Interacts with CRY1. Interacts with CCAR1 and GATA2. Interacts with ZNF318. Interacts with BUD31. Interacts with ARID4A. Interacts with ARID4B. Interacts (via NR LBD domain) with ZBTB7A; the interaction is direct and androgen-dependent. Interacts with NCOR1. Interacts with NCOR2. Interacts with CRY2 in a ligand-dependent manner. Phosphorylated in prostate cancer cells in response to several growth factors including EGF. Phosphorylation is induced by c-Src kinase (CSK). Tyr-510 is one of the major phosphorylation sites and an increase in phosphorylation and Src kinase activity is associated with prostate cancer progression. Phosphorylation by TNK2 enhances the DNA-binding and transcriptional activity. Phosphorylation at Ser-66 by CDK9 regulates AR promoter selectivity and cell growth. Post-translationally, sumoylated on Lys-371 (major) and Lys-496. Ubiquitinated. Deubiquitinated by USP26. 'Lys-6' and 'Lys-27'-linked polyubiquitination by RNF6 modulates AR transcriptional activity and specificity. In terms of processing, palmitoylated by ZDHHC7 and ZDHHC21. Palmitoylation is required for plasma membrane targeting and for rapid intracellular signaling via ERK and AKT kinases and cAMP generation.

It localises to the nucleus. It is found in the cytoplasm. In terms of biological role, steroid hormone receptors are ligand-activated transcription factors that regulate eukaryotic gene expression and affect cellular proliferation and differentiation in target tissues. Transcription factor activity is modulated by bound coactivator and corepressor proteins like ZBTB7A that recruits NCOR1 and NCOR2 to the androgen response elements/ARE on target genes, negatively regulating androgen receptor signaling and androgen-induced cell proliferation. Transcription activation is also down-regulated by NR0B2. Activated, but not phosphorylated, by HIPK3 and ZIPK/DAPK3. This chain is Androgen receptor (AR), found in Papio hamadryas (Hamadryas baboon).